The primary structure comprises 123 residues: Large ribosomal subunit protein uL14 (123 aa).

It belongs to the universal ribosomal protein uL14 family. In terms of assembly, part of the 50S ribosomal subunit. Forms a cluster with proteins L3 and L19. In the 70S ribosome, L14 and L19 interact and together make contacts with the 16S rRNA in bridges B5 and B8.

Its function is as follows. Binds to 23S rRNA. Forms part of two intersubunit bridges in the 70S ribosome. This is Large ribosomal subunit protein uL14 from Aliivibrio fischeri (strain ATCC 700601 / ES114) (Vibrio fischeri).